Reading from the N-terminus, the 753-residue chain is Nuclear hormone receptor family member daf-12 (753 aa).

The interval Met1–Glu109 is disordered. Residues Asn20–Val29 show a composition bias toward basic and acidic residues. Basic residues predominate over residues Arg30 to Ser44. The nuclear receptor DNA-binding region spans Gln115–Asn190. 2 NR C4-type zinc fingers span residues Cys118–Cys138 and Cys154–Cys173. The Nuclear localization signal motif lies at Glu191 to Gly206. 3 disordered regions span residues Lys198 to Pro251, Asn266 to Pro314, and Gly376 to His410. Positions Arg201–Arg211 are enriched in polar residues. The span at Ser212–Pro227 shows a compositional bias: low complexity. Composition is skewed to polar residues over residues Pro285 to Met301 and Met394 to His410. The region spanning Ala516–Lys753 is the NR LBD domain.

Belongs to the nuclear hormone receptor family. In terms of assembly, interacts with din-1 isoform d. In terms of tissue distribution, expressed throughout muscles of the pharynx. Expressed in epidermal seam cells, the vulva, head neurons, mature spermatheca, uterus and intestine.

It localises to the nucleus. In terms of biological role, nuclear receptor which binds directly to response elements in target gene promoters. Activity is modulated by binding of steroid hormone ligands that include dafachronic acids. Regulates expression of genes involved in postembryonic development and the dauer diapause, in response to environmental cues. Inhibits the expression of let-7 family members when bound to corepressor din-1s which is an isoform of din-1. Plays a role in controlling the timing of seam cell development during the larval stages. Has a role in the immune response to bacterial infection, via regulation of let-7 miRNAs. Controls expression of genes that promote the aerobic catabolism of fatty acids for reproductive growth. May be involved in thermotolerance. This chain is Nuclear hormone receptor family member daf-12, found in Caenorhabditis elegans.